Consider the following 489-residue polypeptide: Membrane-bound acylglycerophosphatidylinositol O-acyltransferase frj (489 aa).

3 consecutive transmembrane segments (helical) span residues 2–22 (SIDD…GSYV), 40–60 (VLVV…SLAL), and 75–95 (LVTF…DFYF). Catalysis depends on residues asparagine 331 and histidine 364. 2 consecutive transmembrane segments (helical) span residues 405-425 (VIFW…FLLS) and 433-453 (FYSS…ALGF).

This sequence belongs to the membrane-bound acyltransferase family.

The protein localises to the membrane. The catalysed reaction is a 1-acyl-sn-glycero-3-phospho-(1D-myo-inositol) + (5Z,8Z,11Z,14Z)-eicosatetraenoyl-CoA = a 1-acyl-2-(5Z,8Z,11Z,14Z-eicosatetraenoyl)-sn-glycero-3-phospho-(1D-myo-inositol) + CoA. It catalyses the reaction a 1-acyl-sn-glycero-3-phosphocholine + an acyl-CoA = a 1,2-diacyl-sn-glycero-3-phosphocholine + CoA. It carries out the reaction (9Z)-hexadecenoyl-CoA + 1-hexadecanoyl-sn-glycero-3-phosphocholine = 1-hexadecanoyl-2-(9Z-hexadecenoyl)-sn-glycero-3-phosphocholine + CoA. The enzyme catalyses a 1-acyl-sn-glycero-3-phospho-L-serine + an acyl-CoA = a 1,2-diacyl-sn-glycero-3-phospho-L-serine + CoA. The catalysed reaction is 1-(9Z-octadecenoyl)-sn-glycero-3-phospho-L-serine + (9Z)-hexadecenoyl-CoA = 1-(9Z-octadecenoyl)-2-(9Z-hexadecenoyl)-sn-glycero-3-phospho-L-serine + CoA. It catalyses the reaction a 1-acyl-sn-glycero-3-phosphoethanolamine + an acyl-CoA = a 1,2-diacyl-sn-glycero-3-phosphoethanolamine + CoA. It carries out the reaction 1-hexadecanoyl-sn-glycero-3-phosphoethanolamine + (9Z)-hexadecenoyl-CoA = 1-hexadecanoyl-2-(9Z)-hexadecenoyl-sn-glycero-3-phosphoethanolamine + CoA. The protein operates within lipid metabolism; phospholipid metabolism. Functionally, acyltransferase that mediates the acylation of lysophospholipids to produce phospholipids (glycerophospholipids). Highest activity with lysophosphatidylinositol (1-acyl-sn-glycero-3-phospho-(1D-myo-inositol) or LPI) producing phosphatidylinositol (1,2-diacyl-sn-glycero-3-phospho-(1D-myo-inositol) or PI) (LPIAT activity), but also converts lysophosphatidylcholine (1-acyl-sn-glycero-3-phosphocholine or LPC) to phosphatidylcholine (1,2-diacyl-sn-glycero-3-phosphocholine or PC) (LPCAT activity), lysophosphatidylserine (1-acyl-2-hydroxy-sn-glycero-3-phospho-L-serine or LPS) to phosphatidylserine (1,2-diacyl-sn-glycero-3-phospho-L-serine or PS) (LPSAT activity), and lysophosphatidylethanolamine (1-acyl-sn-glycero-3-phosphoethanolamine or LPE) producing phosphatidylethanolamine (1,2-diacyl-sn-glycero-3-phosphoethanolamine or PE) (LPEAT activity). Has a preference for unsaturated fatty acid arachidonoyl-CoA ((5Z,8Z,11Z,14Z)-eicosatetraenoyl-CoA). Glycerophospholipids are important structural and functional components of cellular membrane, acyl-chain remodeling regulates the molecular species distribution of glycerophospholipids which can affect membrane fluidity and curvature. The protein is Membrane-bound acylglycerophosphatidylinositol O-acyltransferase frj of Drosophila melanogaster (Fruit fly).